A 178-amino-acid polypeptide reads, in one-letter code: CDP-diacylglycerol--glycerol-3-phosphate 3-phosphatidyltransferase (178 aa).

The next 4 membrane-spanning stretches (helical) occupy residues 28–48 (LSSLVLVLFLALMDFLDGFFA), 88–108 (LIFFLLLGRDITLIIGGIFLI), 125–145 (LFVSLSLLSVGILNVYDVNFL), and 147–167 (ILTNVLEIVSLILILVSWVDY).

It belongs to the CDP-alcohol phosphatidyltransferase class-I family.

It localises to the cell membrane. It catalyses the reaction a CDP-1,2-diacyl-sn-glycerol + sn-glycerol 3-phosphate = a 1,2-diacyl-sn-glycero-3-phospho-(1'-sn-glycero-3'-phosphate) + CMP + H(+). It functions in the pathway phospholipid metabolism; phosphatidylglycerol biosynthesis; phosphatidylglycerol from CDP-diacylglycerol: step 1/2. Functionally, this protein catalyzes the committed step to the synthesis of the acidic phospholipids. The protein is CDP-diacylglycerol--glycerol-3-phosphate 3-phosphatidyltransferase (pgsA) of Aquifex aeolicus (strain VF5).